Reading from the N-terminus, the 734-residue chain is Photosystem I P700 chlorophyll a apoprotein A2 (734 aa).

The next 8 membrane-spanning stretches (helical) occupy residues 46–69, 135–158, 175–199, 273–291, 330–353, 369–395, 417–439, and 517–535; these read IFAS…FHVA, LYIG…LHLQ, LNHH…HVAI, MAHH…GHMY, LHFQ…QHMY, AALY…IFFI, AIIS…LYVH, and FLVH…LILV. Positions 559 and 568 each coordinate [4Fe-4S] cluster. The next 2 membrane-spanning stretches (helical) occupy residues 575–596 and 643–665; these read AFYL…YWHW and LSVW…MFLI. Residues H654, M662, and Y670 each contribute to the chlorophyll a site. W671 serves as a coordination point for phylloquinone. The helical transmembrane segment at 707 to 727 threads the bilayer; that stretch reads LVGLAHFSVGYIFTYAAFLIA.

The protein belongs to the PsaA/PsaB family. As to quaternary structure, the PsaA/B heterodimer binds the P700 chlorophyll special pair and subsequent electron acceptors. PSI consists of a core antenna complex that captures photons, and an electron transfer chain that converts photonic excitation into a charge separation. The eukaryotic PSI reaction center is composed of at least 11 subunits. It depends on P700 is a chlorophyll a/chlorophyll a' dimer, A0 is one or more chlorophyll a, A1 is one or both phylloquinones and FX is a shared 4Fe-4S iron-sulfur center. as a cofactor.

The protein localises to the plastid. It is found in the chloroplast thylakoid membrane. It carries out the reaction reduced [plastocyanin] + hnu + oxidized [2Fe-2S]-[ferredoxin] = oxidized [plastocyanin] + reduced [2Fe-2S]-[ferredoxin]. In terms of biological role, psaA and PsaB bind P700, the primary electron donor of photosystem I (PSI), as well as the electron acceptors A0, A1 and FX. PSI is a plastocyanin-ferredoxin oxidoreductase, converting photonic excitation into a charge separation, which transfers an electron from the donor P700 chlorophyll pair to the spectroscopically characterized acceptors A0, A1, FX, FA and FB in turn. Oxidized P700 is reduced on the lumenal side of the thylakoid membrane by plastocyanin. In Populus alba (White poplar), this protein is Photosystem I P700 chlorophyll a apoprotein A2.